A 131-amino-acid polypeptide reads, in one-letter code: Riboflavin kinase (131 aa).

Residue 11–16 participates in CDP binding; sequence GLQKAG. 2 residues coordinate Mg(2+): Thr-40 and Asn-42. Thr-98 and Glu-106 together coordinate FMN. 111-114 lines the CDP pocket; the sequence is EKLR.

The protein belongs to the archaeal riboflavin kinase family. Requires Mg(2+) as cofactor.

The enzyme catalyses riboflavin + CTP = CDP + FMN + H(+). It participates in cofactor biosynthesis; FMN biosynthesis; FMN from riboflavin (CTP route): step 1/1. In terms of biological role, catalyzes the CTP-dependent phosphorylation of riboflavin (vitamin B2) to form flavin mononucleotide (FMN). This is Riboflavin kinase from Methanosphaera stadtmanae (strain ATCC 43021 / DSM 3091 / JCM 11832 / MCB-3).